Consider the following 322-residue polypeptide: DNA primase small subunit PriS (322 aa).

Residues aspartate 86, aspartate 88, and aspartate 226 contribute to the active site.

The protein belongs to the eukaryotic-type primase small subunit family. As to quaternary structure, heterodimer of a small subunit (PriS) and a large subunit (PriL). Requires Mg(2+) as cofactor. The cofactor is Mn(2+).

Catalytic subunit of DNA primase, an RNA polymerase that catalyzes the synthesis of short RNA molecules used as primers for DNA polymerase during DNA replication. The small subunit contains the primase catalytic core and has DNA synthesis activity on its own. Binding to the large subunit stabilizes and modulates the activity, increasing the rate of DNA synthesis while decreasing the length of the DNA fragments, and conferring RNA synthesis capability. The DNA polymerase activity may enable DNA primase to also catalyze primer extension after primer synthesis. May also play a role in DNA repair. This Thermoplasma acidophilum (strain ATCC 25905 / DSM 1728 / JCM 9062 / NBRC 15155 / AMRC-C165) protein is DNA primase small subunit PriS.